Reading from the N-terminus, the 288-residue chain is Protease HtpX (288 aa).

2 helical membrane passes run 5–25 (IALF…VMSL) and 35–55 (GLLV…LLLS). Histidine 140 is a binding site for Zn(2+). Residue glutamate 141 is part of the active site. Histidine 144 provides a ligand contact to Zn(2+). A run of 2 helical transmembrane segments spans residues 155 to 175 (LLQG…GGII) and 194 to 214 (IIVF…SMWF). Glutamate 219 contacts Zn(2+).

It belongs to the peptidase M48B family. Zn(2+) is required as a cofactor.

Its subcellular location is the cell inner membrane. This is Protease HtpX from Stenotrophomonas maltophilia (strain K279a).